We begin with the raw amino-acid sequence, 105 residues long: Defensin-like protein 106 (105 aa).

Residues 1 to 24 (MANTPKTLIAFVFSVIVIISYVHC) form the signal peptide. Intrachain disulfides connect Cys57–Cys94, Cys63–Cys87, Cys73–Cys92, and Cys77–Cys93.

It belongs to the DEFL family.

It localises to the secreted. The chain is Defensin-like protein 106 from Arabidopsis thaliana (Mouse-ear cress).